The sequence spans 125 residues: Fluoride-specific ion channel FluC (125 aa).

4 helical membrane-spanning segments follow: residues 4-24 (WLFV…ISEL), 35-55 (YGTL…FALI), 69-89 (LMVG…DTVV), and 103-123 (MGLN…LVAS). Residues Gly75 and Thr78 each contribute to the Na(+) site.

Belongs to the fluoride channel Fluc/FEX (TC 1.A.43) family.

The protein localises to the cell inner membrane. It carries out the reaction fluoride(in) = fluoride(out). Na(+) is not transported, but it plays an essential structural role and its presence is essential for fluoride channel function. Functionally, fluoride-specific ion channel. Important for reducing fluoride concentration in the cell, thus reducing its toxicity. The protein is Fluoride-specific ion channel FluC of Aeromonas salmonicida (strain A449).